The following is a 356-amino-acid chain: tRNA N6-adenosine threonylcarbamoyltransferase (356 aa).

Residues His115 and His119 each coordinate Fe cation. Residues 138–142 (LVSGG), Asp171, Gly184, and Asn283 each bind substrate. Asp311 provides a ligand contact to Fe cation.

Belongs to the KAE1 / TsaD family. Fe(2+) is required as a cofactor.

The protein localises to the cytoplasm. The enzyme catalyses L-threonylcarbamoyladenylate + adenosine(37) in tRNA = N(6)-L-threonylcarbamoyladenosine(37) in tRNA + AMP + H(+). Functionally, required for the formation of a threonylcarbamoyl group on adenosine at position 37 (t(6)A37) in tRNAs that read codons beginning with adenine. Is involved in the transfer of the threonylcarbamoyl moiety of threonylcarbamoyl-AMP (TC-AMP) to the N6 group of A37, together with TsaE and TsaB. TsaD likely plays a direct catalytic role in this reaction. This is tRNA N6-adenosine threonylcarbamoyltransferase from Prochlorococcus marinus (strain NATL2A).